The sequence spans 283 residues: Pantothenate synthetase (283 aa).

Residue 30–37 coordinates ATP; that stretch reads MGYLHEGH. His-37 serves as the catalytic Proton donor. Gln-61 contacts (R)-pantoate. Beta-alanine is bound at residue Gln-61. ATP is bound at residue 147-150; it reads GQKD. (R)-pantoate is bound at residue Gln-153. ATP is bound by residues Val-176 and 184–187; that span reads MSSR.

Belongs to the pantothenate synthetase family. Homodimer.

The protein resides in the cytoplasm. It carries out the reaction (R)-pantoate + beta-alanine + ATP = (R)-pantothenate + AMP + diphosphate + H(+). It functions in the pathway cofactor biosynthesis; (R)-pantothenate biosynthesis; (R)-pantothenate from (R)-pantoate and beta-alanine: step 1/1. In terms of biological role, catalyzes the condensation of pantoate with beta-alanine in an ATP-dependent reaction via a pantoyl-adenylate intermediate. The chain is Pantothenate synthetase from Thermoanaerobacter sp. (strain X514).